The sequence spans 1020 residues: Probable beta-galactosidase B (1020 aa).

The N-terminal stretch at 1 to 22 is a signal peptide; the sequence is MLISKTVLSGLALGASFVGVSA. Asn-25 carries an N-linked (GlcNAc...) asparagine glycan. Substrate is bound at residue Tyr-90. A glycan (N-linked (GlcNAc...) asparagine) is linked at Asn-111. Positions 135, 136, and 137 each coordinate substrate. N-linked (GlcNAc...) asparagine glycosylation occurs at Asn-172. Asn-195 is a substrate binding site. Glu-196 (proton donor) is an active-site residue. N-linked (GlcNAc...) asparagine glycans are attached at residues Asn-210 and Asn-251. Tyr-264 contributes to the substrate binding site. A disulfide bond links Cys-270 and Cys-323. Asn-271 carries N-linked (GlcNAc...) asparagine glycosylation. Glu-307 serves as the catalytic Nucleophile. Tyr-372 contacts substrate. N-linked (GlcNAc...) asparagine glycans are attached at residues Asn-410, Asn-455, Asn-549, Asn-596, Asn-625, Asn-702, Asn-747, Asn-785, Asn-819, Asn-880, and Asn-919.

It belongs to the glycosyl hydrolase 35 family.

It is found in the secreted. It catalyses the reaction Hydrolysis of terminal non-reducing beta-D-galactose residues in beta-D-galactosides.. Its function is as follows. Cleaves beta-linked terminal galactosyl residues from gangliosides, glycoproteins, and glycosaminoglycans. The sequence is that of Probable beta-galactosidase B (lacB) from Aspergillus flavus (strain ATCC 200026 / FGSC A1120 / IAM 13836 / NRRL 3357 / JCM 12722 / SRRC 167).